The chain runs to 704 residues: Arylphorin (704 aa).

The first 16 residues, 1–16 (MKIVLVLAGLIALVQS), serve as a signal peptide directing secretion. Residues asparagine 73, asparagine 212, and asparagine 360 are each glycosylated (N-linked (GlcNAc...) asparagine).

Belongs to the hemocyanin family. As to quaternary structure, homohexamer of two stacked trimers; disulfide-linked. Post-translationally, glycosylation at Asn-360 is required for proper folding.

It is found in the secreted. It localises to the extracellular space. Functionally, arylphorin is a larval storage protein (LSP) which may serve as a storage protein used primarily as a source of aromatic amino acids for protein synthesis during metamorphosis. It is a constituent of the sclerotizing system of the cuticle, and serves as a carrier for ecdysteroid hormone. In Antheraea pernyi (Chinese oak silk moth), this protein is Arylphorin.